The following is a 477-amino-acid chain: Protein RdxB (477 aa).

At methionine 1–serine 29 the chain is on the cytoplasmic side. A helical membrane pass occupies residues leucine 30–tryptophan 50. Residues aspartate 51 to glutamate 81 are Periplasmic-facing. Residues phenylalanine 82 to alanine 102 form a helical membrane-spanning segment. Residues alanine 103–lysine 154 are Cytoplasmic-facing. A helical membrane pass occupies residues tryptophan 155–aspartate 175. Residues alanine 176–histidine 189 are Periplasmic-facing. A helical transmembrane segment spans residues proline 190–alanine 210. Residues arginine 211 to arginine 338 lie on the Cytoplasmic side of the membrane. One can recognise a 4Fe-4S ferredoxin-type domain in the interval glutamate 253–glycine 281. [4Fe-4S] cluster contacts are provided by cysteine 262, cysteine 265, cysteine 268, cysteine 272, cysteine 286, cysteine 289, cysteine 292, and cysteine 296. The helical transmembrane segment at threonine 339 to leucine 359 threads the bilayer. At arginine 360–asparagine 477 the chain is on the periplasmic side.

The cofactor is [4Fe-4S] cluster.

The protein resides in the cell membrane. Its function is as follows. Involved in a membrane generated redox signal; required to maintain repression of photosynthesis gene expression in the presence of oxygen. This Cereibacter sphaeroides (strain ATCC 17023 / DSM 158 / JCM 6121 / CCUG 31486 / LMG 2827 / NBRC 12203 / NCIMB 8253 / ATH 2.4.1.) (Rhodobacter sphaeroides) protein is Protein RdxB (rdxB).